A 440-amino-acid polypeptide reads, in one-letter code: Oligodendrocyte-myelin glycoprotein (440 aa).

An N-terminal signal peptide occupies residues 1–24 (MEYQILKMSSCLFILLFLTPGILC). In terms of domain architecture, LRRNT spans 25 to 55 (ICPLQCTCTERHRHVDCSGRNLTTLPPGLQE). 2 N-linked (GlcNAc...) asparagine glycosylation sites follow: Asn45 and Asn61. 8 LRR repeats span residues 56-78 (NIIH…TPYT), 79-100 (NLRT…LPRS), 101-121 (LWNM…DTAY), 124-145 (NLKY…KNTL), 147-168 (SLEV…MPSK), 169-189 (LHIV…TLIN), 192-213 (NLTH…SFDQ), and 216-239 (QLQE…TYLL). An N-linked (GlcNAc...) asparagine glycan is attached at Asn103. 5 N-linked (GlcNAc...) asparagine glycosylation sites follow: Asn152, Asn176, Asn189, Asn192, and Asn234. Ser/Thr-rich repeat units follow at residues 229–270 (CDHK…YPTP), 271–292 (PGFT…INSL), 293–335 (SMVT…VAYP), 336–377 (EDTP…PPSP), and 378–416 (VTLS…TRPP). 2 N-linked (GlcNAc...) asparagine glycosylation sites follow: Asn364 and Asn389. Ser417 carries the GPI-anchor amidated serine lipid modification. The propeptide at 418-440 (AASAWKVNASLLLMLNAVVMLAG) is removed in mature form. Residue Asn425 is glycosylated (N-linked (GlcNAc...) asparagine).

Binds to RTN4R. Post-translationally, O-glycosylated in its Ser/Thr-rich repeat domain. As to expression, oligodendrocytes and myelin of the central nervous system.

It is found in the cell membrane. Its function is as follows. Cell adhesion molecule contributing to the interactive process required for myelination in the central nervous system. The polypeptide is Oligodendrocyte-myelin glycoprotein (Omg) (Mus musculus (Mouse)).